The chain runs to 419 residues: Mitochondrial chaperone BCS1 (419 aa).

At 2–15 (PLSDFILALKDNPY) the chain is on the mitochondrial intermembrane side. Residues 16 to 32 (FGAGFGLVGVGTALALA) form a helical membrane-spanning segment. The Mitochondrial matrix portion of the chain corresponds to 33–419 (RKGVQLGLVA…AIHNAESLRR (387 aa)). Y181 is subject to Phosphotyrosine. 230–237 (GPPGCGKS) is an ATP binding site.

The protein belongs to the AAA ATPase family. BCS1 subfamily. In terms of assembly, interacts with LETM1. In terms of tissue distribution, ubiquitous.

The protein localises to the mitochondrion inner membrane. It carries out the reaction ATP + H2O = ADP + phosphate + H(+). Chaperone necessary for the incorporation of Rieske iron-sulfur protein UQCRFS1 into the mitochondrial respiratory chain complex III. Plays an important role in the maintenance of mitochondrial tubular networks, respiratory chain assembly and formation of the LETM1 complex. This Homo sapiens (Human) protein is Mitochondrial chaperone BCS1 (BCS1L).